Consider the following 353-residue polypeptide: Photosystem II D2 protein (353 aa).

T2 carries the post-translational modification N-acetylthreonine. T2 bears the Phosphothreonine mark. Residues 41 to 61 (CAYFALGGWFTGTTFVTSWYT) traverse the membrane as a helical segment. H118 contacts chlorophyll a. The helical transmembrane segment at 125–141 (GFMLRQFELARSVQLRP) threads the bilayer. Pheophytin a is bound by residues Q130 and N143. The helical transmembrane segment at 153-166 (VFVSVFLIYPLGQS) threads the bilayer. H198 provides a ligand contact to chlorophyll a. The chain crosses the membrane as a helical span at residues 208–228 (AALLCAIHGATVENTLFEDGD). A plastoquinone contacts are provided by H215 and F262. H215 is a binding site for Fe cation. H269 provides a ligand contact to Fe cation. Residues 279–295 (GSWMSAIGVVGLALNLR) form a helical membrane-spanning segment.

Belongs to the reaction center PufL/M/PsbA/D family. In terms of assembly, PSII is composed of 1 copy each of membrane proteins PsbA, PsbB, PsbC, PsbD, PsbE, PsbF, PsbH, PsbI, PsbJ, PsbK, PsbL, PsbM, PsbT, PsbX, PsbY, PsbZ, Psb30/Ycf12, at least 3 peripheral proteins of the oxygen-evolving complex and a large number of cofactors. It forms dimeric complexes. Requires The D1/D2 heterodimer binds P680, chlorophylls that are the primary electron donor of PSII, and subsequent electron acceptors. It shares a non-heme iron and each subunit binds pheophytin, quinone, additional chlorophylls, carotenoids and lipids. There is also a Cl(-1) ion associated with D1 and D2, which is required for oxygen evolution. The PSII complex binds additional chlorophylls, carotenoids and specific lipids. as cofactor.

Its subcellular location is the plastid. It localises to the chloroplast thylakoid membrane. The catalysed reaction is 2 a plastoquinone + 4 hnu + 2 H2O = 2 a plastoquinol + O2. Functionally, photosystem II (PSII) is a light-driven water:plastoquinone oxidoreductase that uses light energy to abstract electrons from H(2)O, generating O(2) and a proton gradient subsequently used for ATP formation. It consists of a core antenna complex that captures photons, and an electron transfer chain that converts photonic excitation into a charge separation. The D1/D2 (PsbA/PsbD) reaction center heterodimer binds P680, the primary electron donor of PSII as well as several subsequent electron acceptors. D2 is needed for assembly of a stable PSII complex. The protein is Photosystem II D2 protein of Pinus koraiensis (Korean pine).